Consider the following 279-residue polypeptide: HTH-type transcriptional regulator HdfR (279 aa).

Residues 1–58 enclose the HTH lysR-type domain; it reads MDTELLKTFLEVSRTRHFGRAAESLYLTQSAVSFRIRQLENQLGVNLFTRHRNNIRLT. The H-T-H motif DNA-binding region spans 18 to 37; that stretch reads FGRAAESLYLTQSAVSFRIR.

The protein belongs to the LysR transcriptional regulatory family.

In terms of biological role, negatively regulates the transcription of the flagellar master operon flhDC by binding to the upstream region of the operon. This is HTH-type transcriptional regulator HdfR from Escherichia coli (strain ATCC 8739 / DSM 1576 / NBRC 3972 / NCIMB 8545 / WDCM 00012 / Crooks).